Consider the following 274-residue polypeptide: Serine acetyltransferase (274 aa).

It belongs to the transferase hexapeptide repeat family.

The protein resides in the cytoplasm. It carries out the reaction L-serine + acetyl-CoA = O-acetyl-L-serine + CoA. It functions in the pathway amino-acid biosynthesis; L-cysteine biosynthesis; L-cysteine from L-serine: step 1/2. The chain is Serine acetyltransferase (cysE) from Buchnera aphidicola subsp. Acyrthosiphon pisum (strain APS) (Acyrthosiphon pisum symbiotic bacterium).